The chain runs to 65 residues: Kassorin-M (65 aa).

Positions 1–22 are cleaved as a signal peptide; that stretch reads MLTLKKSMLLLFFLGMVSFSLA. Residues 23 to 51 constitute a propeptide that is removed on maturation; it reads DDKREDEAEEGEDKRADEGEEKRAAEKKR. Residues 24–45 form a disordered region; sequence DKREDEAEEGEDKRADEGEEKR. Residue Leu64 is modified to Leucine amide.

The protein belongs to the frog skin active peptide (FSAP) family. Brevinin subfamily. In terms of tissue distribution, expressed by the skin glands.

Its subcellular location is the secreted. Functionally, induces contraction of smooth muscle in isolated guinea pig urinary bladder (EC50=4.66 nM). Has no antimicrobial activity against the Gram-positive bacterium S.aureus, the Gram-negative bacterium E.coli and the yeast C.albicans. Elicits histamine release from rat peritoneal mast cells. In Phlyctimantis maculatus (Red-legged running frog), this protein is Kassorin-M.